The chain runs to 316 residues: Protoheme IX farnesyltransferase (316 aa).

Transmembrane regions (helical) follow at residues 34-54 (VMSLVVFTAFAGLVLAPGHIN), 55-75 (PFIGFTAILCIAIGAGASGAL), 95-115 (IPAGKILPQEALAFGLTLSAF), 118-138 (IILGLAVHWLAAGLLAFTIFF), 155-175 (IVIGGAAGAFPPMIGWACVTG), 182-202 (IVLFLIIFLWTPAHFWALALF), 228-250 (IVIYAVLTAVSGVCPTLLGFASL), 254-273 (AFATVMGLGFVWYSLGVLRM), and 287-307 (FAFSIAYLFAIFSALLVDYAI).

It belongs to the UbiA prenyltransferase family. Protoheme IX farnesyltransferase subfamily.

The protein resides in the cell inner membrane. It catalyses the reaction heme b + (2E,6E)-farnesyl diphosphate + H2O = Fe(II)-heme o + diphosphate. The protein operates within porphyrin-containing compound metabolism; heme O biosynthesis; heme O from protoheme: step 1/1. Its function is as follows. Converts heme B (protoheme IX) to heme O by substitution of the vinyl group on carbon 2 of heme B porphyrin ring with a hydroxyethyl farnesyl side group. This Rhizobium meliloti (strain 1021) (Ensifer meliloti) protein is Protoheme IX farnesyltransferase.